The chain runs to 434 residues: Methyl-coenzyme M reductase subunit beta (434 aa).

Coenzyme M is bound at residue Y365. G367 contacts coenzyme B.

Belongs to the methyl-coenzyme M reductase beta subunit family. In terms of assembly, MCR is a hexamer of two alpha, two beta, and two gamma chains, forming a dimer of heterotrimers. Coenzyme F430 is required as a cofactor.

It localises to the cytoplasm. It carries out the reaction coenzyme B + methyl-coenzyme M = methane + coenzyme M-coenzyme B heterodisulfide. It participates in one-carbon metabolism; methyl-coenzyme M reduction; methane from methyl-coenzyme M: step 1/1. Its function is as follows. Component of the methyl-coenzyme M reductase (MCR) I that catalyzes the reductive cleavage of methyl-coenzyme M (CoM-S-CH3 or 2-(methylthio)ethanesulfonate) using coenzyme B (CoB or 7-mercaptoheptanoylthreonine phosphate) as reductant which results in the production of methane and the mixed heterodisulfide of CoB and CoM (CoM-S-S-CoB). This is the final step in methanogenesis. The chain is Methyl-coenzyme M reductase subunit beta (mcrB) from Methanosarcina barkeri (strain Fusaro / DSM 804).